We begin with the raw amino-acid sequence, 811 residues long: Receptor-like protein 52 (811 aa).

A signal peptide spans 1–22; sequence MTFLPLLFIFFFLTSIPFPAFS. At 23 to 770 the chain is on the extracellular side; that stretch reads QYNDRSTLLN…EDEEEVMNWT (748 aa). 6 N-linked (GlcNAc...) asparagine glycosylation sites follow: Asn-47, Asn-64, Asn-74, Asn-93, Asn-109, and Asn-124. LRR repeat units lie at residues 62–86, 87–110, 112–134, 135–159, 161–183, and 184–208; these read AGNV…ICNF, PNLK…LYNC, KLQY…INRL, APKL…IGRI, KLKV…IGDL, and SELE…EFGK. The LRR 7; degenerate repeat unit spans residues 211–233; the sequence is KLKYMWLEEMNLIGEISAVVFEN. Residues Asn-233, Asn-246, Asn-260, Asn-295, and Asn-304 are each glycosylated (N-linked (GlcNAc...) asparagine). LRR repeat units follow at residues 234–258, 260–281, 282–305, 307–329, 330–354, 356–377, 379–401, and 403–427; these read MTDL…LFGL, NLTE…SISA, KNLV…IGNL, NLEL…IGKL, PELK…GFIS, LERF…LCHG, KLQS…LGDC, and TLSS…TRSN. N-linked (GlcNAc...) asparagine glycosylation is found at Asn-389, Asn-422, Asn-429, Asn-455, Asn-464, and Asn-485. LRR repeat units lie at residues 441-465, 466-489, 491-511, 512-537, 539-557, 558-581, 625-649, 650-673, 674-697, and 699-722; these read LHSL…IANL, STLE…ISTS, KSID…LVRI, SSLE…SMQQ, QVLV…QNGF, SKLR…FFVN, LNTF…VGLL, KELH…MGNL, IELE…LGKL, and YLAY…QFQT. Asn-525 carries N-linked (GlcNAc...) asparagine glycosylation. Asn-571 and Asn-581 each carry an N-linked (GlcNAc...) asparagine glycan. Asn-656 carries N-linked (GlcNAc...) asparagine glycosylation. A glycan (N-linked (GlcNAc...) asparagine) is linked at Asn-704. The chain crosses the membrane as a helical span at residues 771-791; it reads AAAIGSIPGISIGLTMGYILV. Over 792 to 811 the chain is Cytoplasmic; the sequence is SYKPEWLMNSGRNKRRIKPI.

Belongs to the RLP family.

The protein resides in the cell membrane. Required for defense against powdery mildew pathogen. The polypeptide is Receptor-like protein 52 (Arabidopsis thaliana (Mouse-ear cress)).